We begin with the raw amino-acid sequence, 271 residues long: Tumor necrosis factor receptor superfamily member 4 (271 aa).

The N-terminal stretch at 1–19 (MYVWVQQPTAFLLLGLSLG) is a signal peptide. Topologically, residues 20–210 (VTVKLNCVKD…TPTLVAPEGP (191 aa)) are extracellular. 2 TNFR-Cys repeats span residues 25–60 (NCVK…TVCH) and 61–102 (PCEP…DTVC). Disulfide bonds link Cys26–Cys37, Cys38–Cys51, Cys41–Cys59, Cys62–Cys76, Cys79–Cys94, Cys82–Cys102, Cys104–Cys122, and Cys125–Cys138. The stretch at 103 to 123 (QCRPGTQPRQDSSHKLGVDCV) is one TNFR-Cys 3; truncated repeat. The TNFR-Cys 4 repeat unit spans residues 124–164 (PCPPGHFSPGSNQACKPWTNCTLSGKQIRHPASNSLDTVCE). An N-linked (GlcNAc...) asparagine glycan is attached at Asn143. Cysteines 144 and 163 form a disulfide. A helical transmembrane segment spans residues 211-235 (AFAVILGLGLGLLAPLTVLLALYLL). The Cytoplasmic segment spans residues 236–271 (RKAWRSPNTPKPCWGNSFRTPIQEEQTDTHFTLAKI).

In terms of assembly, interacts with TRAF2, TRAF3 and TRAF5. As to expression, activated T-cells.

It localises to the membrane. Its function is as follows. Receptor for TNFSF4/OX40L/GP34. Is a costimulatory molecule implicated in long-term T-cell immunity. The polypeptide is Tumor necrosis factor receptor superfamily member 4 (Tnfrsf4) (Rattus norvegicus (Rat)).